We begin with the raw amino-acid sequence, 143 residues long: MNSIQLIIDIILILWILILTVLYFKRRQLNVDIVKNKKIIRAKRYIVFYVISEYKVKGDDLERVIRNSLKDLLGSVWLNIANPKVVTYREDTQEGIISTNRVGYKAVLASLPFAKEINNNKILIVPRRTTGSLKKAKKLIGLK.

This sequence belongs to the eukaryotic/archaeal RNase P protein component 2 family. Consists of a catalytic RNA component and at least 4-5 protein subunits.

It is found in the cytoplasm. It carries out the reaction Endonucleolytic cleavage of RNA, removing 5'-extranucleotides from tRNA precursor.. Its function is as follows. Part of ribonuclease P, a protein complex that generates mature tRNA molecules by cleaving their 5'-ends. This is Ribonuclease P protein component 2 from Saccharolobus solfataricus (strain ATCC 35092 / DSM 1617 / JCM 11322 / P2) (Sulfolobus solfataricus).